Here is a 209-residue protein sequence, read N- to C-terminus: MQTLRREAARPYVPSGTLEASFPAPLYSDDYLSLEGPRWPLVIRQATRWKYTPMGRDAAGQLWYTGLTNSDTREAWYNLPLDPASPFREAYNRWHGCYQRREHTMPSAYTQHLRETAWHDPIIPAQYQVPSTRWGSTLWKDRPIRGKEYVINRNRYGVEPLWRASDYVPSLSAPQRPPGTTQNYREWGLEPYCPSTCQRPLPSSTPMPR.

Microtubule inner protein component of sperm flagellar doublet microtubules.

It localises to the cytoplasm. The protein resides in the cytoskeleton. The protein localises to the cilium axoneme. It is found in the flagellum axoneme. Functionally, microtubule inner protein (MIP) part of the dynein-decorated doublet microtubules (DMTs) in cilia axoneme, which is required for motile cilia beating. Located at the center of the tektin bundle where may function to recruit tektins or stabilize the bundle. In Macaca fascicularis (Crab-eating macaque), this protein is Tektin bundle-interacting protein 1 (TEKTIP1).